We begin with the raw amino-acid sequence, 215 residues long: Pyrrolidone-carboxylate peptidase (215 aa).

Catalysis depends on residues Glu-80, Cys-143, and His-167.

Belongs to the peptidase C15 family. In terms of assembly, homotetramer.

It is found in the cytoplasm. It carries out the reaction Release of an N-terminal pyroglutamyl group from a polypeptide, the second amino acid generally not being Pro.. In terms of biological role, removes 5-oxoproline from various penultimate amino acid residues except L-proline. This is Pyrrolidone-carboxylate peptidase from Pectobacterium atrosepticum (strain SCRI 1043 / ATCC BAA-672) (Erwinia carotovora subsp. atroseptica).